Consider the following 337-residue polypeptide: 4-hydroxy-3-methylbut-2-enyl diphosphate reductase (337 aa).

Cys-38 is a [4Fe-4S] cluster binding site. (2E)-4-hydroxy-3-methylbut-2-enyl diphosphate contacts are provided by His-67 and His-100. Residues His-67 and His-100 each coordinate dimethylallyl diphosphate. Isopentenyl diphosphate contacts are provided by His-67 and His-100. Position 122 (Cys-122) interacts with [4Fe-4S] cluster. (2E)-4-hydroxy-3-methylbut-2-enyl diphosphate is bound at residue His-150. Residue His-150 participates in dimethylallyl diphosphate binding. Isopentenyl diphosphate is bound at residue His-150. Glu-152 functions as the Proton donor in the catalytic mechanism. (2E)-4-hydroxy-3-methylbut-2-enyl diphosphate is bound at residue Thr-190. Cys-220 serves as a coordination point for [4Fe-4S] cluster. Positions 248, 249, 250, and 293 each coordinate (2E)-4-hydroxy-3-methylbut-2-enyl diphosphate. The dimethylallyl diphosphate site is built by Ser-248, Ser-249, Asn-250, and Ser-293. Isopentenyl diphosphate-binding residues include Ser-248, Ser-249, Asn-250, and Ser-293.

Belongs to the IspH family. [4Fe-4S] cluster serves as cofactor.

It catalyses the reaction isopentenyl diphosphate + 2 oxidized [2Fe-2S]-[ferredoxin] + H2O = (2E)-4-hydroxy-3-methylbut-2-enyl diphosphate + 2 reduced [2Fe-2S]-[ferredoxin] + 2 H(+). The catalysed reaction is dimethylallyl diphosphate + 2 oxidized [2Fe-2S]-[ferredoxin] + H2O = (2E)-4-hydroxy-3-methylbut-2-enyl diphosphate + 2 reduced [2Fe-2S]-[ferredoxin] + 2 H(+). The protein operates within isoprenoid biosynthesis; dimethylallyl diphosphate biosynthesis; dimethylallyl diphosphate from (2E)-4-hydroxy-3-methylbutenyl diphosphate: step 1/1. Its pathway is isoprenoid biosynthesis; isopentenyl diphosphate biosynthesis via DXP pathway; isopentenyl diphosphate from 1-deoxy-D-xylulose 5-phosphate: step 6/6. Catalyzes the conversion of 1-hydroxy-2-methyl-2-(E)-butenyl 4-diphosphate (HMBPP) into a mixture of isopentenyl diphosphate (IPP) and dimethylallyl diphosphate (DMAPP). Acts in the terminal step of the DOXP/MEP pathway for isoprenoid precursor biosynthesis. The sequence is that of 4-hydroxy-3-methylbut-2-enyl diphosphate reductase from Mycolicibacterium vanbaalenii (strain DSM 7251 / JCM 13017 / BCRC 16820 / KCTC 9966 / NRRL B-24157 / PYR-1) (Mycobacterium vanbaalenii).